A 413-amino-acid polypeptide reads, in one-letter code: Gamma-glutamyl phosphate reductase (413 aa).

The protein belongs to the gamma-glutamyl phosphate reductase family.

The protein localises to the cytoplasm. It catalyses the reaction L-glutamate 5-semialdehyde + phosphate + NADP(+) = L-glutamyl 5-phosphate + NADPH + H(+). It participates in amino-acid biosynthesis; L-proline biosynthesis; L-glutamate 5-semialdehyde from L-glutamate: step 2/2. In terms of biological role, catalyzes the NADPH-dependent reduction of L-glutamate 5-phosphate into L-glutamate 5-semialdehyde and phosphate. The product spontaneously undergoes cyclization to form 1-pyrroline-5-carboxylate. The polypeptide is Gamma-glutamyl phosphate reductase (Salinispora tropica (strain ATCC BAA-916 / DSM 44818 / JCM 13857 / NBRC 105044 / CNB-440)).